Consider the following 79-residue polypeptide: Sec-independent protein translocase protein TatA (79 aa).

Residues 1–21 (MHMPSGTQWLIILLIVVLLFG) traverse the membrane as a helical segment.

Belongs to the TatA/E family. The Tat system comprises two distinct complexes: a TatABC complex, containing multiple copies of TatA, TatB and TatC subunits, and a separate TatA complex, containing only TatA subunits. Substrates initially bind to the TatABC complex, which probably triggers association of the separate TatA complex to form the active translocon.

Its subcellular location is the cell inner membrane. Functionally, part of the twin-arginine translocation (Tat) system that transports large folded proteins containing a characteristic twin-arginine motif in their signal peptide across membranes. TatA could form the protein-conducting channel of the Tat system. The chain is Sec-independent protein translocase protein TatA from Campylobacter lari (strain RM2100 / D67 / ATCC BAA-1060).